A 165-amino-acid chain; its full sequence is Glutamyl-tRNA(Gln) amidotransferase subunit F, mitochondrial (165 aa).

The transit peptide at 1 to 19 (MKSILRSTTRNLITSSRRF) directs the protein to the mitochondrion.

The protein belongs to the GatF family. In terms of assembly, subunit of the heterotrimeric GatFAB amidotransferase (AdT) complex, composed of A, B and F subunits.

The protein localises to the mitochondrion inner membrane. It catalyses the reaction L-glutamyl-tRNA(Gln) + L-glutamine + ATP + H2O = L-glutaminyl-tRNA(Gln) + L-glutamate + ADP + phosphate + H(+). Functionally, allows the formation of correctly charged Gln-tRNA(Gln) through the transamidation of misacylated Glu-tRNA(Gln) in the mitochondria. The reaction takes place in the presence of glutamine and ATP through an activated gamma-phospho-Glu-tRNA(Gln). Required for proper protein synthesis within the mitochondrion. This Candida albicans (strain SC5314 / ATCC MYA-2876) (Yeast) protein is Glutamyl-tRNA(Gln) amidotransferase subunit F, mitochondrial.